The chain runs to 409 residues: Lactadherin (409 aa).

2 EGF-like domains span residues 2–41 (SGDFCDSSLCLNGGTCLLDQDPQKPFHCLCPEGFTGLICN) and 44–88 (EKGP…IHCE). 3 disulfides stabilise this stretch: C6-C17, C11-C29, and C31-C40. Residue N41 is glycosylated (N-linked (GlcNAc...) asparagine). 6 disulfides stabilise this stretch: C48–C59, C53–C76, C78–C87, C91–C247, C234–C238, and C252–C409. The short motif at 67 to 69 (RGD) is the Cell attachment site element. F5/8 type C domains lie at 91-247 (CNAP…LLGC) and 252-409 (CAEP…LLGC). A glycan (N-linked (GlcNAc...) asparagine) is linked at N372.

As to expression, mammary epithelial cell surfaces and spermatozoan. Also present in testis, epididymis, uterus, adrenal gland, tonsil, muscle, heart, lymphatic gland, thymus and kidney but not spleen, liver, lung or brain.

The protein resides in the membrane. Its subcellular location is the secreted. It localises to the cytoplasmic vesicle. The protein localises to the secretory vesicle. It is found in the acrosome membrane. Functionally, contributes to phagocytic removal of apoptotic cells in many tissues. Plays an important role in the maintenance of intestinal epithelial homeostasis and the promotion of mucosal healing. Promotes VEGF-dependent neovascularization. Specific ligand for the alpha-v/beta-3 and alpha-v/beta-5 receptors. Also binds to phosphatidylserine-enriched cell surfaces in a receptor-independent manner. Zona pellucida-binding protein which may play a role in gamete interaction. In Sus scrofa (Pig), this protein is Lactadherin (MFGE8).